Reading from the N-terminus, the 407-residue chain is Arginine biosynthesis bifunctional protein ArgJ (407 aa).

6 residues coordinate substrate: Thr-157, Lys-183, Thr-194, Glu-280, Asn-402, and Thr-407. Thr-194 acts as the Nucleophile in catalysis.

Belongs to the ArgJ family. In terms of assembly, heterotetramer of two alpha and two beta chains.

It localises to the cytoplasm. The enzyme catalyses N(2)-acetyl-L-ornithine + L-glutamate = N-acetyl-L-glutamate + L-ornithine. It carries out the reaction L-glutamate + acetyl-CoA = N-acetyl-L-glutamate + CoA + H(+). It functions in the pathway amino-acid biosynthesis; L-arginine biosynthesis; L-ornithine and N-acetyl-L-glutamate from L-glutamate and N(2)-acetyl-L-ornithine (cyclic): step 1/1. Its pathway is amino-acid biosynthesis; L-arginine biosynthesis; N(2)-acetyl-L-ornithine from L-glutamate: step 1/4. Catalyzes two activities which are involved in the cyclic version of arginine biosynthesis: the synthesis of N-acetylglutamate from glutamate and acetyl-CoA as the acetyl donor, and of ornithine by transacetylation between N(2)-acetylornithine and glutamate. In Oceanobacillus iheyensis (strain DSM 14371 / CIP 107618 / JCM 11309 / KCTC 3954 / HTE831), this protein is Arginine biosynthesis bifunctional protein ArgJ.